The following is a 317-amino-acid chain: Ribosomal protein L11 methyltransferase (317 aa).

Positions 158, 179, 201, and 244 each coordinate S-adenosyl-L-methionine.

The protein belongs to the methyltransferase superfamily. PrmA family.

Its subcellular location is the cytoplasm. The enzyme catalyses L-lysyl-[protein] + 3 S-adenosyl-L-methionine = N(6),N(6),N(6)-trimethyl-L-lysyl-[protein] + 3 S-adenosyl-L-homocysteine + 3 H(+). Methylates ribosomal protein L11. The chain is Ribosomal protein L11 methyltransferase from Streptococcus uberis (strain ATCC BAA-854 / 0140J).